Consider the following 556-residue polypeptide: Formate--tetrahydrofolate ligase (556 aa).

65–72 (TPAGEGKS) contacts ATP.

It belongs to the formate--tetrahydrofolate ligase family.

The enzyme catalyses (6S)-5,6,7,8-tetrahydrofolate + formate + ATP = (6R)-10-formyltetrahydrofolate + ADP + phosphate. It participates in one-carbon metabolism; tetrahydrofolate interconversion. The polypeptide is Formate--tetrahydrofolate ligase (Clostridium beijerinckii (strain ATCC 51743 / NCIMB 8052) (Clostridium acetobutylicum)).